The primary structure comprises 185 residues: TATA-box-binding protein 2 (185 aa).

Repeat copies occupy residues 7-84 (IENI…ANEL) and 100-178 (VQNV…KTQL).

It belongs to the TBP family.

Functionally, general factor that plays a role in the activation of archaeal genes transcribed by RNA polymerase. Binds specifically to the TATA box promoter element which lies close to the position of transcription initiation. In Methanosarcina acetivorans (strain ATCC 35395 / DSM 2834 / JCM 12185 / C2A), this protein is TATA-box-binding protein 2.